Reading from the N-terminus, the 627-residue chain is Phosphomethylpyrimidine synthase (627 aa).

Positions 1 to 24 are enriched in polar residues; the sequence is MSATQKNNITRLEQLDRQSTQPFP. Positions 1 to 29 are disordered; sequence MSATQKNNITRLEQLDRQSTQPFPNSRKV. Residues Asn231, Met260, Tyr289, His325, 345–347, 386–389, and Glu425 contribute to the substrate site; these read SRG and DGLR. His429 provides a ligand contact to Zn(2+). Residue Tyr452 participates in substrate binding. His493 contributes to the Zn(2+) binding site. The [4Fe-4S] cluster site is built by Cys573, Cys576, and Cys581.

The protein belongs to the ThiC family. Homodimer. [4Fe-4S] cluster is required as a cofactor.

The enzyme catalyses 5-amino-1-(5-phospho-beta-D-ribosyl)imidazole + S-adenosyl-L-methionine = 4-amino-2-methyl-5-(phosphooxymethyl)pyrimidine + CO + 5'-deoxyadenosine + formate + L-methionine + 3 H(+). Its pathway is cofactor biosynthesis; thiamine diphosphate biosynthesis. Its function is as follows. Catalyzes the synthesis of the hydroxymethylpyrimidine phosphate (HMP-P) moiety of thiamine from aminoimidazole ribotide (AIR) in a radical S-adenosyl-L-methionine (SAM)-dependent reaction. In Pseudomonas aeruginosa (strain UCBPP-PA14), this protein is Phosphomethylpyrimidine synthase.